The sequence spans 213 residues: T-cell surface glycoprotein CD8 beta chain (213 aa).

The signal sequence occupies residues 1-21; that stretch reads MQPWLWLVFSMKLAALWSSSA. The 112-residue stretch at 22-133 folds into the Ig-like V-type domain; sequence LIQTPSSLLV…KMVFGTGTKL (112 aa). Residues 22–175 are Extracellular-facing; sequence LIQTPSSLLV…QKGLTCSLTT (154 aa). An N-linked (GlcNAc...) asparagine glycan is attached at Asn34. Cys41 and Cys117 form a disulfide bridge. The helical transmembrane segment at 176–196 threads the bilayer; that stretch reads LSLLVVCILLLLAFLGVAVYF. Over 197 to 213 the chain is Cytoplasmic; it reads YCVRRRARIHFMKQFHK.

As to quaternary structure, forms disulfide-linked heterodimers with CD8A at the cell surface. Interacts with CD3D; this interaction couples TCR-CD3 with CD8. Interacts with LCK. In terms of processing, palmitoylated at the cytoplasmic tail and thereby targets the heterodimer CD8A/CD8B to lipid rafts unlike CD8A homodimers.

Its subcellular location is the membrane. Integral membrane glycoprotein that plays an essential role in the immune response and serves multiple functions in responses against both external and internal offenses. In T-cells, functions primarily as a coreceptor for MHC class I molecule:peptide complex. The antigens presented by class I peptides are derived from cytosolic proteins while class II derived from extracellular proteins. Interacts simultaneously with the T-cell receptor (TCR) and the MHC class I proteins presented by antigen presenting cells (APCs). In turn, recruits the Src kinase LCK to the vicinity of the TCR-CD3 complex. A palmitoylation site in the cytoplasmic tail of CD8B chain contributes to partitioning of CD8 into the plasma membrane lipid rafts where signaling proteins are enriched. Once LCK recruited, it initiates different intracellular signaling pathways by phosphorylating various substrates ultimately leading to lymphokine production, motility, adhesion and activation of cytotoxic T-lymphocytes (CTLs). Additionally, plays a critical role in thymic selection of CD8+ T-cells. The protein is T-cell surface glycoprotein CD8 beta chain (Cd8b) of Mus musculus (Mouse).